The following is a 98-amino-acid chain: Co-chaperonin GroES (98 aa).

Residues 32-56 (NAKEKPQQGEVLAVGPGRRDDEGKR) form a disordered region.

It belongs to the GroES chaperonin family. In terms of assembly, heptamer of 7 subunits arranged in a ring. Interacts with the chaperonin GroEL.

It is found in the cytoplasm. Together with the chaperonin GroEL, plays an essential role in assisting protein folding. The GroEL-GroES system forms a nano-cage that allows encapsulation of the non-native substrate proteins and provides a physical environment optimized to promote and accelerate protein folding. GroES binds to the apical surface of the GroEL ring, thereby capping the opening of the GroEL channel. The protein is Co-chaperonin GroES of Bifidobacterium animalis subsp. lactis (strain AD011).